A 448-amino-acid chain; its full sequence is Phosphoglucosamine mutase (448 aa).

S100 functions as the Phosphoserine intermediate in the catalytic mechanism. Residues S100, D240, D242, and D244 each contribute to the Mg(2+) site. S100 carries the phosphoserine modification.

This sequence belongs to the phosphohexose mutase family. Requires Mg(2+) as cofactor. Post-translationally, activated by phosphorylation.

The catalysed reaction is alpha-D-glucosamine 1-phosphate = D-glucosamine 6-phosphate. In terms of biological role, catalyzes the conversion of glucosamine-6-phosphate to glucosamine-1-phosphate. This is Phosphoglucosamine mutase from Clostridioides difficile (strain 630) (Peptoclostridium difficile).